The following is a 657-amino-acid chain: tRNA 5-methylaminomethyl-2-thiouridine biosynthesis bifunctional protein MnmC (657 aa).

Positions Met1–Gln235 are tRNA (mnm(5)s(2)U34)-methyltransferase. Residues Ile261–Thr657 form an FAD-dependent cmnm(5)s(2)U34 oxidoreductase region.

This sequence in the N-terminal section; belongs to the methyltransferase superfamily. tRNA (mnm(5)s(2)U34)-methyltransferase family. The protein in the C-terminal section; belongs to the DAO family. FAD serves as cofactor.

The protein localises to the cytoplasm. It carries out the reaction 5-aminomethyl-2-thiouridine(34) in tRNA + S-adenosyl-L-methionine = 5-methylaminomethyl-2-thiouridine(34) in tRNA + S-adenosyl-L-homocysteine + H(+). Functionally, catalyzes the last two steps in the biosynthesis of 5-methylaminomethyl-2-thiouridine (mnm(5)s(2)U) at the wobble position (U34) in tRNA. Catalyzes the FAD-dependent demodification of cmnm(5)s(2)U34 to nm(5)s(2)U34, followed by the transfer of a methyl group from S-adenosyl-L-methionine to nm(5)s(2)U34, to form mnm(5)s(2)U34. In Ectopseudomonas mendocina (strain ymp) (Pseudomonas mendocina), this protein is tRNA 5-methylaminomethyl-2-thiouridine biosynthesis bifunctional protein MnmC.